The sequence spans 343 residues: MPGTIILAIETSCDETGVGITRLEADGTLTLLADEVASSVDEHVRFGGVVPEIASRAHLEALGPAMRRALTTAGIVRPDVVATTIGPGLAGALLVGVAAAKAYAAAWGVPFYAVNHLGGHLAADVYEHGPLPECVALLVSGGHTHLLHVRSLGEPMVELGATVDDAAGEAYDKVARLLGLGYPGGKVLDDLARSGDPDAIVFPRGMTGPSDDPCAFSFSGLKTAVACYVEAHPDFRPADVAAGFQEAVADVLTRKAVRAATGLGVSTLLIAGGVAANSRLRELATQRCSEAGLTLRIPRPRLCTDNGAMIAAFAAHLVAAKAAPSPLDVPSDPGLPVVKGQVG.

Positions 116 and 120 each coordinate Fe cation. Residues 138 to 142 (LVSGG), Asp-172, Gly-185, Asp-189, and Asn-277 each bind substrate. Asp-305 is a binding site for Fe cation.

The protein belongs to the KAE1 / TsaD family. Requires Fe(2+) as cofactor.

It is found in the cytoplasm. It carries out the reaction L-threonylcarbamoyladenylate + adenosine(37) in tRNA = N(6)-L-threonylcarbamoyladenosine(37) in tRNA + AMP + H(+). In terms of biological role, required for the formation of a threonylcarbamoyl group on adenosine at position 37 (t(6)A37) in tRNAs that read codons beginning with adenine. Is involved in the transfer of the threonylcarbamoyl moiety of threonylcarbamoyl-AMP (TC-AMP) to the N6 group of A37, together with TsaE and TsaB. TsaD likely plays a direct catalytic role in this reaction. In Mycobacterium ulcerans (strain Agy99), this protein is tRNA N6-adenosine threonylcarbamoyltransferase.